The chain runs to 159 residues: Ribosomal RNA large subunit methyltransferase H (159 aa).

Gly-108 provides a ligand contact to S-adenosyl-L-methionine.

It belongs to the RNA methyltransferase RlmH family. Homodimer.

It is found in the cytoplasm. It catalyses the reaction pseudouridine(1915) in 23S rRNA + S-adenosyl-L-methionine = N(3)-methylpseudouridine(1915) in 23S rRNA + S-adenosyl-L-homocysteine + H(+). Specifically methylates the pseudouridine at position 1915 (m3Psi1915) in 23S rRNA. The protein is Ribosomal RNA large subunit methyltransferase H of Lactobacillus gasseri (strain ATCC 33323 / DSM 20243 / BCRC 14619 / CIP 102991 / JCM 1131 / KCTC 3163 / NCIMB 11718 / NCTC 13722 / AM63).